Here is a 96-residue protein sequence, read N- to C-terminus: Large ribosomal subunit protein eL43 (96 aa).

Residues 41–62 (CPVCGFMKLKRISTSIWECKKC) form a C4-type zinc finger.

The protein belongs to the eukaryotic ribosomal protein eL43 family. The cofactor is Zn(2+).

This Methanococcus aeolicus (strain ATCC BAA-1280 / DSM 17508 / OCM 812 / Nankai-3) protein is Large ribosomal subunit protein eL43.